The sequence spans 1252 residues: Myosin-1 (1252 aa).

Residues 1-27 (MAPSKKAGKKVTPASKKSAGQGKVAKA) are disordered. One can recognise a Myosin motor domain in the interval 38–712 (VGVSDMTLLT…TLFALETMRD (675 aa)). Residue 128–135 (GESGAGKT) coordinates ATP. Phosphoserine is present on Ser356. The interval 403–485 (IIGILDIFGF…PGIFAALNDA (83 aa)) is actin-binding. IQ domains lie at 716–736 (HNMA…KHEC) and 737–762 (ARRI…YGHQ). In terms of domain architecture, TH1 spans 770–953 (RRRFSLLSYR…TVHVASGEPP (184 aa)). Disordered stretches follow at residues 945–1049 (VHVA…PETP) and 1103–1228 (PPKA…PATA). Composition is skewed to pro residues over residues 989-999 (RSVPKPKPVAQ) and 1028-1046 (RPPP…PAKP). Residues 1046-1104 (PETPMYRAKFAFEGQEGEMSLKKDDVVELVEKDDNGWWLVKMDGVEGWAPNNYLELVPP) enclose the SH3 domain. A compositionally biased stretch (polar residues) spans 1162–1175 (ADTTPASSRPSSAI). The span at 1178–1193 (KPPPPVAAKPKPPVIP) shows a compositional bias: pro residues. Residues 1194–1203 (VKPSVSAKGP) show a composition bias toward low complexity. Residues 1204–1215 (AKPPIPTAPRPP) show a composition bias toward pro residues. Low complexity predominate over residues 1216–1228 (AASTSRSSKPATA).

Belongs to the TRAFAC class myosin-kinesin ATPase superfamily. Myosin family. In terms of processing, phosphorylation of the TEDS site (Ser-356) is required for the polarization of the actin cytoskeleton. Phosphorylation probably activates the myosin-I ATPase activity.

It localises to the cytoplasm. The protein resides in the cytoskeleton. The protein localises to the actin patch. Its function is as follows. Type-I myosin implicated in the organization of the actin cytoskeleton. Required for proper actin cytoskeleton polarization. At the cell cortex, assembles in patch-like structures together with proteins from the actin-polymerizing machinery and promotes actin assembly. Functions as actin nucleation-promoting factor (NPF) for the Arp2/3 complex. In Laccaria bicolor (strain S238N-H82 / ATCC MYA-4686) (Bicoloured deceiver), this protein is Myosin-1 (MYO1).